We begin with the raw amino-acid sequence, 127 residues long: MSYRKLGRTSSQRKALLRDLTTDLIVNGRITTTEARAKEVRKTADKMITLAKHGDLASRRKAAAFVRNVVADVKEDGDDIRVQSALQNLFEELAPKYADRNGGYTRILKTMPRRGDGAPMVILELVD.

Belongs to the bacterial ribosomal protein bL17 family. Part of the 50S ribosomal subunit. Contacts protein L32.

This Limosilactobacillus reuteri (strain DSM 20016) (Lactobacillus reuteri) protein is Large ribosomal subunit protein bL17.